Here is a 192-residue protein sequence, read N- to C-terminus: Small ribosomal subunit protein bS16 (192 aa).

Residues 149-161 (EKKAAEAKAKAEA) are compositionally biased toward basic and acidic residues. The segment at 149–192 (EKKAAEAKAKAEAEAAAAAEEATETEETPMEAAAEEAPAAESAE) is disordered. Residues 178 to 192 (MEAAAEEAPAAESAE) are compositionally biased toward low complexity.

The protein belongs to the bacterial ribosomal protein bS16 family.

This Porphyromonas gingivalis (strain ATCC 33277 / DSM 20709 / CIP 103683 / JCM 12257 / NCTC 11834 / 2561) protein is Small ribosomal subunit protein bS16.